Consider the following 224-residue polypeptide: Deoxyribose-phosphate aldolase (224 aa).

Aspartate 92 functions as the Proton donor/acceptor in the catalytic mechanism. Catalysis depends on lysine 155, which acts as the Schiff-base intermediate with acetaldehyde. Lysine 184 serves as the catalytic Proton donor/acceptor.

This sequence belongs to the DeoC/FbaB aldolase family. DeoC type 1 subfamily.

The protein localises to the cytoplasm. The enzyme catalyses 2-deoxy-D-ribose 5-phosphate = D-glyceraldehyde 3-phosphate + acetaldehyde. Its pathway is carbohydrate degradation; 2-deoxy-D-ribose 1-phosphate degradation; D-glyceraldehyde 3-phosphate and acetaldehyde from 2-deoxy-alpha-D-ribose 1-phosphate: step 2/2. Functionally, catalyzes a reversible aldol reaction between acetaldehyde and D-glyceraldehyde 3-phosphate to generate 2-deoxy-D-ribose 5-phosphate. This chain is Deoxyribose-phosphate aldolase, found in Halalkalibacterium halodurans (strain ATCC BAA-125 / DSM 18197 / FERM 7344 / JCM 9153 / C-125) (Bacillus halodurans).